The sequence spans 437 residues: MPIISKVVARQILDSRGNPTVEVDVYTESSFGRAAVPSGASTGVHEAVELRDGDASVYLGKGVLKAVENVNTVISDALEGMLVTEQEEIDEMLLALDGTPNKSNLGANALLGVSLACARAGAEYTGLPLYRYIGGTMANTLPVPMMNVLNGGAHADNTVDFQEFMIMPAGFTSFSDALRAGAEIFHSLKALLKSKGLSTAVGDEGGFAPNLRSNEEAIELVIEAIGKAGYKVGSPTDKGGLGDAQVMIALDPASSEFYDAAKKRYVFKKSSKQELTSTEMAEYWERWVNTYPIISIEDGMAEDDWEGWKLLTDKVGSRVQLVGDDLFVTNSIRLADGINRKVANSILIKVNQIGTLTETLQAINLARLNGYTSVISHRSGETEDSTIAQIAVATNAGQIKTGSMSRSDRMAKYNELLRIEEELGSQARYPGKAAFRV.

Q162 serves as a coordination point for (2R)-2-phosphoglycerate. Catalysis depends on E204, which acts as the Proton donor. D251, E297, and D324 together coordinate Mg(2+). The (2R)-2-phosphoglycerate site is built by K349, R378, S379, and K400. The active-site Proton acceptor is the K349.

It belongs to the enolase family. Mg(2+) serves as cofactor.

It localises to the cytoplasm. The protein localises to the secreted. Its subcellular location is the cell surface. The enzyme catalyses (2R)-2-phosphoglycerate = phosphoenolpyruvate + H2O. Its pathway is carbohydrate degradation; glycolysis; pyruvate from D-glyceraldehyde 3-phosphate: step 4/5. Catalyzes the reversible conversion of 2-phosphoglycerate (2-PG) into phosphoenolpyruvate (PEP). It is essential for the degradation of carbohydrates via glycolysis. In Chlorobium chlorochromatii (strain CaD3), this protein is Enolase.